Here is a 228-residue protein sequence, read N- to C-terminus: FtsZ-localized protein A (228 aa).

Positions valine 3 to proline 85 constitute a GST N-terminal domain. In terms of domain architecture, GST C-terminal spans aspartate 90–tyrosine 223.

Belongs to the GST superfamily. In terms of assembly, homodimer. Interacts with FtsZ filaments. Probably interacts with the GTPase domain of FtsZ.

It is found in the cytoplasm. Its function is as follows. Essential cell division protein that must bind to FtsZ for division to occur. Critical coordinator of envelope constriction through its interaction with FtsZ. Promotes the formation of highly curved FtsZ filaments, reduces the GTPase activity of FtsZ and stabilizes FtsZ polymers. May regulate FtsZ function by modulating its superstructure. Does not bind to glutathione. The chain is FtsZ-localized protein A from Caulobacter vibrioides (strain NA1000 / CB15N) (Caulobacter crescentus).